We begin with the raw amino-acid sequence, 695 residues long: MAP kinase phosphatase with leucine-rich repeats protein 2 (695 aa).

10 LRR repeats span residues 101–122, 124–145, 147–167, 170–191, 193–214, 215–235, 239–260, 262–283, 286–307, and 309–330; these read SLKSLILDFNKITEIPDCITLL, NLNHLSLAANQLTHVPEFLSQL, SLETFEIGINQFTCFPLNVCK, SLTSLHLETNNIKSLPEEFLNL, NLKDLSLFDNQLKEIPDSLPNN, IEKLNLGCNDISSSKSDSLIR, SLTTLNLSENKIEELDESLSCL, NVKTLMLDCNMIKVIPGSVLGS, SLVTLNLPHNLISDLPPEVILL, and NLRIIDLRGNNFENCKKLIPTE. The segment covering 413–426 has biased composition (low complexity); it reads SENNEINENNQLLT. Disordered stretches follow at residues 413–438 and 492–519; these read SENNEINENNQLLTTDDDYNTDKNDS and QEQLPQSKPENEKLTNIPEQQQKQQQQQ. A Tyrosine-protein phosphatase domain is found at 556–695; it reads VPDLIIDKLY…LKKFEKDLFK (140 aa). Cys639 (phosphocysteine intermediate) is an active-site residue.

The protein belongs to the protein-tyrosine phosphatase family. Non-receptor class dual specificity subfamily.

The enzyme catalyses O-phospho-L-tyrosyl-[protein] + H2O = L-tyrosyl-[protein] + phosphate. It carries out the reaction O-phospho-L-seryl-[protein] + H2O = L-seryl-[protein] + phosphate. The catalysed reaction is O-phospho-L-threonyl-[protein] + H2O = L-threonyl-[protein] + phosphate. Functionally, probable phosphatase with dual specificity toward Ser/Thr and Tyr-containing proteins. This is MAP kinase phosphatase with leucine-rich repeats protein 2 (mpl2) from Dictyostelium discoideum (Social amoeba).